The chain runs to 278 residues: 3-methyl-2-oxobutanoate hydroxymethyltransferase (278 aa).

Residues Asp-43 and Asp-82 each contribute to the Mg(2+) site. Residues Asp-43–Ser-44, Asp-82, and Lys-112 each bind 3-methyl-2-oxobutanoate. Residue Glu-114 coordinates Mg(2+). Catalysis depends on Glu-181, which acts as the Proton acceptor.

The protein belongs to the PanB family. In terms of assembly, homodecamer; pentamer of dimers. Mg(2+) serves as cofactor.

It is found in the cytoplasm. The enzyme catalyses 3-methyl-2-oxobutanoate + (6R)-5,10-methylene-5,6,7,8-tetrahydrofolate + H2O = 2-dehydropantoate + (6S)-5,6,7,8-tetrahydrofolate. The protein operates within cofactor biosynthesis; (R)-pantothenate biosynthesis; (R)-pantoate from 3-methyl-2-oxobutanoate: step 1/2. In terms of biological role, catalyzes the reversible reaction in which hydroxymethyl group from 5,10-methylenetetrahydrofolate is transferred onto alpha-ketoisovalerate to form ketopantoate. In Desulfitobacterium hafniense (strain Y51), this protein is 3-methyl-2-oxobutanoate hydroxymethyltransferase.